The following is a 464-amino-acid chain: Putative guanine nucleotide-binding protein subunit alpha (464 aa).

One can recognise a G-alpha domain in the interval 33-415; the sequence is HSKLKRGDGP…ETKRDKYNEK (383 aa). Positions 36 to 49 are G1 motif; it reads LKRGDGPGESGKST. GTP-binding positions include 41–48, 147–151, 214–220, 239–243, 268–271, and 310–313; these read GPGESGKS, DVGGQ, LRSRTKT, RNRD, and TSQS. Position 48 (S48) interacts with Mg(2+). Residues 212 to 220 form a G2 motif region; the sequence is DVLRSRTKT. Mg(2+) is bound at residue T220. Residues 235–244 form a G3 motif region; that stretch reads FRMVDVGGQR. Residues 306–313 form a G4 motif region; the sequence is VMFLTSQS. The segment at 382–387 is G5 motif; it reads GYSGTC.

This sequence in the N-terminal section; belongs to the G-alpha family. In the C-terminal section; belongs to the class-II aminoacyl-tRNA synthetase family. As to quaternary structure, g proteins are composed of 3 units; alpha, beta and gamma. The alpha chain contains the guanine nucleotide binding site.

Its function is as follows. Guanine nucleotide-binding proteins (G proteins) are involved as modulators or transducers in various transmembrane signaling systems. The sequence is that of Putative guanine nucleotide-binding protein subunit alpha from Leishmania donovani.